Consider the following 603-residue polypeptide: Myotubularin (603 aa).

Phosphoserine is present on residues S13 and S18. The GRAM domain maps to 29 to 97 (QDVSETVPRL…GVISRIEKMG (69 aa)). The 376-residue stretch at 163–538 (GWTVYNPVEE…RHLELWVNYY (376 aa)) folds into the Myotubularin phosphatase domain. A 1,2-diacyl-sn-glycero-3-phospho-(1D-myo-inositol-3,5-bisphosphate) is bound by residues N288, N313, and I314. Positions 288, 313, and 314 each coordinate a 1,2-diacyl-sn-glycero-3-phospho-(1D-myo-inositol-3-phosphate). C375 functions as the Phosphocysteine intermediate in the catalytic mechanism. S376, D377, G378, W379, D380, R381, K417, and R421 together coordinate a 1,2-diacyl-sn-glycero-3-phospho-(1D-myo-inositol-3,5-bisphosphate). 6 residues coordinate a 1,2-diacyl-sn-glycero-3-phospho-(1D-myo-inositol-3-phosphate): S376, D377, G378, W379, D380, and R381. An a 1,2-diacyl-sn-glycero-3-phospho-(1D-myo-inositol-3-phosphate)-binding site is contributed by R421. T495 carries the post-translational modification Phosphothreonine. S588 carries the post-translational modification Phosphoserine.

Belongs to the protein-tyrosine phosphatase family. Non-receptor class myotubularin subfamily. Heterodimer with MTMR12. Interacts with KMT2A/MLL1 (via SET domain). Interacts with DES in skeletal muscle but not in cardiac muscle. Interacts with SPEG. As to expression, widely expressed with highest levels detected in heart and muscle and low levels in brain (at protein level). Expressed in skeletal muscles (at protein level).

The protein resides in the cytoplasm. It is found in the cell membrane. It localises to the cell projection. The protein localises to the filopodium. Its subcellular location is the ruffle. The protein resides in the late endosome. It is found in the myofibril. It localises to the sarcomere. It carries out the reaction a 1,2-diacyl-sn-glycero-3-phospho-(1D-myo-inositol-3-phosphate) + H2O = a 1,2-diacyl-sn-glycero-3-phospho-(1D-myo-inositol) + phosphate. The enzyme catalyses a 1,2-diacyl-sn-glycero-3-phospho-(1D-myo-inositol-3,5-bisphosphate) + H2O = a 1,2-diacyl-sn-glycero-3-phospho-(1D-myo-inositol-5-phosphate) + phosphate. The catalysed reaction is 1,2-dioctanoyl-sn-glycero-3-phospho-(1-D-myo-inositol-3-phosphate) + H2O = 1,2-dioctanoyl-sn-glycero-3-phospho-(1D-myo-inositol) + phosphate. It catalyses the reaction 1,2-dioctanoyl-sn-glycero-3-phospho-(1D-myo-inositol-3,5-bisphosphate) + H2O = 1,2-dioctanoyl-sn-glycero-3-phospho-(1D-myo-inositol-5-phosphate) + phosphate. It carries out the reaction 1,2-dihexadecanoyl-sn-glycero-3-phospho-(1D-myo-inositol-3,5-phosphate) + H2O = 1,2-dihexadecanoyl-sn-glycero-3-phospho-(1D-myo-inositol-5-phosphate) + phosphate. With respect to regulation, allosterically activated by phosphatidylinositol 5-phosphate (PI5P). In terms of biological role, lipid phosphatase which dephosphorylates phosphatidylinositol 3-monophosphate (PI3P) and phosphatidylinositol 3,5-bisphosphate (PI(3,5)P2). Has also been shown to dephosphorylate phosphotyrosine- and phosphoserine-containing peptides. Negatively regulates EGFR degradation through regulation of EGFR trafficking from the late endosome to the lysosome. Plays a role in vacuolar formation and morphology. Regulates desmin intermediate filament assembly and architecture. Plays a role in mitochondrial morphology and positioning. Required for skeletal muscle maintenance but not for myogenesis. In skeletal muscles, stabilizes MTMR12 protein levels. This is Myotubularin from Mus musculus (Mouse).